We begin with the raw amino-acid sequence, 153 residues long: Pheromone-binding protein Gp-9 (153 aa).

An N-terminal signal peptide occupies residues 1-19 (MKTFVLHIFIFALVAFASA). Cystine bridges form between cysteine 37-cysteine 77, cysteine 73-cysteine 129, and cysteine 118-cysteine 138.

It belongs to the PBP/GOBP family. Homodimer.

It is found in the secreted. Its function is as follows. Colony queen number, a major feature of social organization, is associated with worker genotype for Gp-9. Colonies are headed by either a single reproductive queen (monogyne form) or multiple queens (polygyne form). Differences in worker Gp-9 genotypes between social forms may cause differences in workers' abilities to recognize queens and regulate their numbers. The polypeptide is Pheromone-binding protein Gp-9 (Solenopsis n. sp. (strain JP-2002) (Fire ant)).